Consider the following 183-residue polypeptide: Erythropoietin (183 aa).

A signal peptide spans 1-23 (MFHGSGLFALLLMVLEWTRPGLS). 2 disulfides stabilise this stretch: Cys30–Cys178 and Cys52–Cys56. Asn61 and Asn104 each carry an N-linked (GlcNAc...) asparagine glycan.

It belongs to the EPO/TPO family. Post-translationally, N-glycosylated. Expressed in heart and liver.

It localises to the secreted. Erythropoietin is the principal hormone involved in the regulation of erythrocyte differentiation and the maintenance of a physiological level of circulating erythrocyte mass. This Danio rerio (Zebrafish) protein is Erythropoietin (epo).